The chain runs to 238 residues: MADS-box protein 04g005320 (238 aa).

The region spanning 1 to 61 (MGRGKVELKR…GKLYEFCSTS (61 aa)) is the MADS-box domain. The K-box domain occupies 87-177 (SQNNYQEYMK…KTKLEENSVA (91 aa)).

It localises to the nucleus. In terms of biological role, probable MADS-box transcription factor that functions with J2 and EJ2 in meristem maturation. This chain is MADS-box protein 04g005320, found in Solanum lycopersicum (Tomato).